A 272-amino-acid polypeptide reads, in one-letter code: 3-methyl-2-oxobutanoate hydroxymethyltransferase (272 aa).

Mg(2+)-binding residues include aspartate 54 and aspartate 93. 3-methyl-2-oxobutanoate is bound by residues 54–55 (DS), aspartate 93, and lysine 121. Glutamate 123 provides a ligand contact to Mg(2+). The Proton acceptor role is filled by glutamate 190.

It belongs to the PanB family. As to quaternary structure, homodecamer; pentamer of dimers. Requires Mg(2+) as cofactor.

It is found in the cytoplasm. It carries out the reaction 3-methyl-2-oxobutanoate + (6R)-5,10-methylene-5,6,7,8-tetrahydrofolate + H2O = 2-dehydropantoate + (6S)-5,6,7,8-tetrahydrofolate. It functions in the pathway cofactor biosynthesis; (R)-pantothenate biosynthesis; (R)-pantoate from 3-methyl-2-oxobutanoate: step 1/2. Its function is as follows. Catalyzes the reversible reaction in which hydroxymethyl group from 5,10-methylenetetrahydrofolate is transferred onto alpha-ketoisovalerate to form ketopantoate. The protein is 3-methyl-2-oxobutanoate hydroxymethyltransferase of Janthinobacterium sp. (strain Marseille) (Minibacterium massiliensis).